The primary structure comprises 158 residues: Pathogenesis-related protein 2 (158 aa).

Belongs to the BetVI family.

In Petroselinum crispum (Parsley), this protein is Pathogenesis-related protein 2 (PR2).